We begin with the raw amino-acid sequence, 331 residues long: Putative heme-binding peroxidase (331 aa).

Residue histidine 50 is the Proton acceptor of the active site. Histidine 174 contacts heme b. Tryptophan 190 functions as the Tryptophan radical intermediate in the catalytic mechanism. Positions 288–331 (INTDNQKGGYRSAPKKSDSTPATSGQPGASKTGGCPVMHHKAKL) are disordered. A compositionally biased stretch (polar residues) spans 306–316 (STPATSGQPGA).

The protein belongs to the peroxidase family. Cytochrome c peroxidase subfamily. It depends on heme b as a cofactor.

Destroys radicals which are normally produced within the cells and which are toxic to biological systems. This Gibberella zeae (strain ATCC MYA-4620 / CBS 123657 / FGSC 9075 / NRRL 31084 / PH-1) (Wheat head blight fungus) protein is Putative heme-binding peroxidase.